The sequence spans 365 residues: Chaperone protein DnaJ (365 aa).

Residues 5-71 (DFYEILGIAK…QKRQAYDQFG (67 aa)) enclose the J domain. Residues 128 to 206 (GTTVKIRIPK…CHGKGVVHKQ (79 aa)) form a CR-type zinc finger. Zn(2+) contacts are provided by cysteine 141, cysteine 144, cysteine 158, cysteine 161, cysteine 180, cysteine 183, cysteine 194, and cysteine 197. 4 CXXCXGXG motif repeats span residues 141–148 (CDTCSGTG), 158–165 (CLTCGGAG), 180–187 (CNACSGTG), and 194–201 (CNNCHGKG).

This sequence belongs to the DnaJ family. Homodimer. Zn(2+) is required as a cofactor.

The protein localises to the cytoplasm. Its function is as follows. Participates actively in the response to hyperosmotic and heat shock by preventing the aggregation of stress-denatured proteins and by disaggregating proteins, also in an autonomous, DnaK-independent fashion. Unfolded proteins bind initially to DnaJ; upon interaction with the DnaJ-bound protein, DnaK hydrolyzes its bound ATP, resulting in the formation of a stable complex. GrpE releases ADP from DnaK; ATP binding to DnaK triggers the release of the substrate protein, thus completing the reaction cycle. Several rounds of ATP-dependent interactions between DnaJ, DnaK and GrpE are required for fully efficient folding. Also involved, together with DnaK and GrpE, in the DNA replication of plasmids through activation of initiation proteins. This Vesicomyosocius okutanii subsp. Calyptogena okutanii (strain HA) protein is Chaperone protein DnaJ.